Consider the following 147-residue polypeptide: MRLSDIRPTPGSMRKRIRVGRGIGSGKGKTSGKGHKGQKARGTGKVHPWFEGGQTPIHRRLPKFGFKNFTKKVYTVVNVEDLERKFNSGDEVTPEKLLEVGLIKKINDGVKILGNGEITKPLTVVAHAFSSSARRKIEAVGGKAEVI.

Residues 20-54 (GRGIGSGKGKTSGKGHKGQKARGTGKVHPWFEGGQ) are disordered. Positions 30–44 (TSGKGHKGQKARGTG) are enriched in basic residues.

This sequence belongs to the universal ribosomal protein uL15 family. Part of the 50S ribosomal subunit.

In terms of biological role, binds to the 23S rRNA. This is Large ribosomal subunit protein uL15 from Thermosipho africanus (strain TCF52B).